The following is a 281-amino-acid chain: 3-hydroxyanthranilate 3,4-dioxygenase (281 aa).

Positions 1–162 are domain A (catalytic); the sequence is MSGVTAIEIP…SNEFKTGKPG (162 aa). Arginine 45 contacts O2. Positions 49, 55, and 93 each coordinate Fe cation. Glutamate 55 provides a ligand contact to substrate. Substrate-binding residues include arginine 97 and glutamate 107. The segment at 163-179 is linker; that stretch reads KGTFACNAPYEARWTDL. The tract at residues 180 to 281 is domain B; it reads PVPINRKEFI…GFAITIRMPA (102 aa).

Belongs to the 3-HAO family. The cofactor is Fe(2+).

The protein resides in the cytoplasm. It carries out the reaction 3-hydroxyanthranilate + O2 = (2Z,4Z)-2-amino-3-carboxymuconate 6-semialdehyde. It participates in cofactor biosynthesis; NAD(+) biosynthesis; quinolinate from L-kynurenine: step 3/3. Functionally, catalyzes the oxidative ring opening of 3-hydroxyanthranilate to 2-amino-3-carboxymuconate semialdehyde, which spontaneously cyclizes to quinolinate. The chain is 3-hydroxyanthranilate 3,4-dioxygenase (haao-1) from Caenorhabditis elegans.